Consider the following 768-residue polypeptide: Cullin-3-B (768 aa).

Positions 677–698 (VAAKQGESDPERKETRQKVDDD) are disordered. Positions 682 to 698 (GESDPERKETRQKVDDD) are enriched in basic and acidic residues. In terms of domain architecture, Cullin neddylation spans 698 to 760 (DRKHEIEAAI…REYLARTPED (63 aa)). Lysine 712 participates in a covalent cross-link: Glycyl lysine isopeptide (Lys-Gly) (interchain with G-Cter in NEDD8).

The protein belongs to the cullin family. As to quaternary structure, component of multiple BCR (BTB-CUL3-RBX1) E3 ubiquitin-protein ligase complexes formed of cul3, rbx1 and a variable BTB domain-containing protein acting as both, adapter to cullin and substrate recognition subunit. Interacts with btbd6. Post-translationally, neddylated. Attachment of NEDD8 is required for the E3 ubiquitin-protein ligase activity of the SCF-like complex.

Its subcellular location is the nucleus. The protein operates within protein modification; protein ubiquitination. Functionally, probable core component of cullin-based SCF-like E3 ubiquitin-protein ligase complexes which mediate the ubiquitination and subsequent proteasomal degradation of target proteins. The E3 ubiquitin-protein ligase activity of the complex is dependent on the neddylation of the cullin subunit. Involved in ER-Golgi transport by regulating the size of COPII coats, thereby playing a key role in collagen export, which is required for embryonic stem (ES) cells division. May play a role in the regulation of mittotic entry via ubiquitination of aurka. This chain is Cullin-3-B (cul3b), found in Xenopus laevis (African clawed frog).